We begin with the raw amino-acid sequence, 530 residues long: UDP-glucuronosyltransferase 1A10 (530 aa).

The first 25 residues, 1–25 (MARAGWTSPVPLCVCLLLTCGFAEA), serve as a signal peptide directing secretion. N-linked (GlcNAc...) asparagine glycans are attached at residues Asn71, Asn292, and Asn344. The chain crosses the membrane as a helical span at residues 488–504 (VIGFLLAVVLTVAFITF).

This sequence belongs to the UDP-glycosyltransferase family. Homodimer. Homooligomer. Interacts with UGT1A1, UGT1A3, UGT1A4, UGT1A6, UGT1A7, UGT1A8 and UGT1A9 to form heterodimers. Isoform 1 interacts with isoform 2/i2 suggesting that oligomerization is involved in negative regulation of transferase activity by isoform 2. Isoform 1 also interacts with respective i2 isoforms of UGT1A1, UGT1A3, UGT1A4, UGT1A6, UGT1A7, UGT1A8 and UGT1A9. As to expression, liver and colon. Isoform 1 and isoform 2 are expressed in colon, esophagus and small intestine; isoform 2 but not isoform 1 is expressed in liver or kidney.

It is found in the endoplasmic reticulum membrane. The enzyme catalyses glucuronate acceptor + UDP-alpha-D-glucuronate = acceptor beta-D-glucuronoside + UDP + H(+). It carries out the reaction 17beta-estradiol + UDP-alpha-D-glucuronate = 17beta-estradiol 3-O-(beta-D-glucuronate) + UDP + H(+). The catalysed reaction is 17beta-estradiol + UDP-alpha-D-glucuronate = 17beta-estradiol 17-O-(beta-D-glucuronate) + UDP + H(+). It catalyses the reaction 17alpha-estradiol + UDP-alpha-D-glucuronate = 17alpha-estradiol 3-O-(beta-D-glucuronate) + UDP + H(+). The enzyme catalyses 16alpha,17beta-estriol + UDP-alpha-D-glucuronate = 16alpha,17beta-estriol 3-O-(beta-D-glucuronate) + UDP + H(+). It carries out the reaction 16beta,17beta-estriol + UDP-alpha-D-glucuronate = 16beta,17beta-estriol 3-O-(beta-D-glucuronate) + UDP + H(+). The catalysed reaction is 16alpha,17alpha-estriol + UDP-alpha-D-glucuronate = 16alpha,17alpha-estriol 3-O-(beta-D-glucuronate) + UDP + H(+). It catalyses the reaction 16alpha-hydroxyestrone + UDP-alpha-D-glucuronate = 16alpha-hydroxyestrone 3-O-(beta-D-glucuronate) + UDP + H(+). The enzyme catalyses estrone + UDP-alpha-D-glucuronate = estrone 3-O-(beta-D-glucuronate) + UDP + H(+). It carries out the reaction prunetin + UDP-alpha-D-glucuronate = prunetin-4'-O-beta-D-glucuronide + UDP. The catalysed reaction is (5Z,8Z,11Z,14Z)-eicosatetraenoate + UDP-alpha-D-glucuronate = O-[(5Z),(8Z),(11Z),(14Z)-eicosatetraenoyl]-beta-D-glucuronate + UDP. It catalyses the reaction 15-hydroxy-(5Z,8Z,11Z,13E)-eicosatetraenoate + UDP-alpha-D-glucuronate = 15-O-(beta-D-glucuronosyl)-(5Z,8Z,11Z,14Z)-eicosatetraenoate + UDP + H(+). The enzyme catalyses prostaglandin B1 + UDP-alpha-D-glucuronate = 15-O-(beta-D-glucuronosyl)-prostaglandin B1 + UDP + H(+). It carries out the reaction (E)-ferulate + UDP-alpha-D-glucuronate = (E)-4-O-(beta-D-glucuronosyl)-ferulate + UDP + H(+). The catalysed reaction is (E)-ferulate + UDP-alpha-D-glucuronate = (E)-ferulic acid beta-D-glucuronate ester + UDP. It catalyses the reaction losartan + UDP-alpha-D-glucuronate = losartan-2-N-beta-D-glucuronide + UDP. The enzyme catalyses candesartan + UDP-alpha-D-glucuronate = candesartan O-beta-D-glucuronoside + UDP. It carries out the reaction candesartan + UDP-alpha-D-glucuronate = candesartan-2-N-beta-D-glucuronide + UDP. The catalysed reaction is zolasartan + UDP-alpha-D-glucuronate = zolarsartan-1-N-beta-D-glucuronide + UDP. Functionally, UDP-glucuronosyltransferase (UGT) that catalyzes phase II biotransformation reactions in which lipophilic substrates are conjugated with glucuronic acid to increase the metabolite's water solubility, thereby facilitating excretion into either the urine or bile. Essential for the elimination and detoxification of drugs, xenobiotics and endogenous compounds. Catalyzes the glucuronidation of endogenous estrogen hormones such as estradiol, estrone and estriol. Involved in the glucuronidation of arachidonic acid (AA) and AA-derived eicosanoids including 15-HETE and PGB1. Involved in the glucuronidation of the phytochemical ferulic acid at the phenolic or the carboxylic acid group. Also catalyzes the glucuronidation of the isoflavones genistein, daidzein, glycitein, formononetin, biochanin A and prunetin, which are phytoestrogens with anticancer and cardiovascular properties. Involved in the glucuronidation of the AGTR1 angiotensin receptor antagonist losartan, caderastan and zolarsatan, drugs which can inhibit the effect of angiotensin II. In terms of biological role, lacks UGT glucuronidation activity but acts as a negative regulator of isoform 1. This Homo sapiens (Human) protein is UDP-glucuronosyltransferase 1A10.